Consider the following 479-residue polypeptide: ATP synthase subunit beta (479 aa).

168 to 175 (GGAGVGKT) is an ATP binding site.

Belongs to the ATPase alpha/beta chains family. F-type ATPases have 2 components, CF(1) - the catalytic core - and CF(0) - the membrane proton channel. CF(1) has five subunits: alpha(3), beta(3), gamma(1), delta(1), epsilon(1). CF(0) has three main subunits: a(1), b(2) and c(9-12). The alpha and beta chains form an alternating ring which encloses part of the gamma chain. CF(1) is attached to CF(0) by a central stalk formed by the gamma and epsilon chains, while a peripheral stalk is formed by the delta and b chains.

Its subcellular location is the cell membrane. The catalysed reaction is ATP + H2O + 4 H(+)(in) = ADP + phosphate + 5 H(+)(out). Its function is as follows. Produces ATP from ADP in the presence of a proton gradient across the membrane. The catalytic sites are hosted primarily by the beta subunits. This is ATP synthase subunit beta from Frankia alni (strain DSM 45986 / CECT 9034 / ACN14a).